The primary structure comprises 101 residues: Small ribosomal subunit protein bS18c (101 aa).

The protein belongs to the bacterial ribosomal protein bS18 family. In terms of assembly, part of the 30S ribosomal subunit.

It localises to the plastid. The protein localises to the chloroplast. The polypeptide is Small ribosomal subunit protein bS18c (Panax ginseng (Korean ginseng)).